Here is a 509-residue protein sequence, read N- to C-terminus: MTRLSILQHLLTFLILSKINATSTTESYFDSSEEAPNVLLNHLNNESEGEELTQINDTQPAFVPGSSKRLTEYLLSRHNLNAPPDGLLYVEYELELVHILGIDELKQTMTVLIYVDEHWVDPSLTWDPALFGGITKTWIPLDKIWVPDIIVFNMVKSNRLAHEDLLSAVRAPARIHYNGTIVASHPAVHTVSCEINIRHFPLDDQRCAIEIASWAYGQEKIRLHAHTDHSLEHYKRNEEWHLLNLNVSEEKYEHEGVEVSEVKFEISLKRRPLFYMVTLTFPSYIMCAISVVGLFARFSTTGEREERFTLGVTAILTMAVLSLVVSEKVPHSSTHVPLLVAYFLFNMVIVSIAAMTTGIVMKVHRLGRYGDEPSDFWMRCFLLKPVFRTSNRRKYRMNPEEPTQVILVSEAKNGEVLTKKSTELNGTVVKEIMLSSRLEALEEYIRKMVNRCETIKWELDEIDAAENIELVRRRSTNGYVRISERLDILFMFLFLSTVTIPVAVLFYLT.

A signal peptide spans 1–21 (MTRLSILQHLLTFLILSKINA). At 22-275 (TSTTESYFDS…ISLKRRPLFY (254 aa)) the chain is on the extracellular side. Cys193 and Cys207 form a disulfide bridge. The next 3 membrane-spanning stretches (helical) occupy residues 276-296 (MVTL…GLFA), 310-330 (LGVT…EKVP), and 336-356 (VPLL…AAMT). Over 357–487 (TGIVMKVHRL…GYVRISERLD (131 aa)) the chain is Cytoplasmic. Residues 488 to 508 (ILFMFLFLSTVTIPVAVLFYL) form a helical membrane-spanning segment.

The protein belongs to the ligand-gated ion channel (TC 1.A.9) family. Acetylcholine receptor (TC 1.A.9.1) subfamily. The functional channel is a heterooligomer of pbo-5 and pbo-6. May self-associate to form homooligomers with negligible ion channel activity. In terms of tissue distribution, expressed in the posterior body muscles. Also detected in the RIFL, RIFR and RIS head neurons.

It is found in the membrane. In terms of biological role, forms a proton-gated ion channel with pbo-6 that is activated by acidification of the posterior coelomic space, leading to posterior body wall muscle contraction (pBoc) during the defecation cycle. Probably by regulating the defecation motor program, required for fatty acid uptake by intestinal cells. Does not bind neurotransmitters such as acetylcholine, gamma-aminobutyric acid, glycine, serotonin, glutamate or choline. This chain is Proton-gated ion channel subunit pbo-5, found in Caenorhabditis elegans.